A 355-amino-acid polypeptide reads, in one-letter code: S-adenosylmethionine:tRNA ribosyltransferase-isomerase (355 aa).

The protein belongs to the QueA family. In terms of assembly, monomer.

The protein localises to the cytoplasm. It catalyses the reaction 7-aminomethyl-7-carbaguanosine(34) in tRNA + S-adenosyl-L-methionine = epoxyqueuosine(34) in tRNA + adenine + L-methionine + 2 H(+). The protein operates within tRNA modification; tRNA-queuosine biosynthesis. Transfers and isomerizes the ribose moiety from AdoMet to the 7-aminomethyl group of 7-deazaguanine (preQ1-tRNA) to give epoxyqueuosine (oQ-tRNA). This Aeromonas salmonicida (strain A449) protein is S-adenosylmethionine:tRNA ribosyltransferase-isomerase.